Reading from the N-terminus, the 154-residue chain is Myoglobin (154 aa).

Residues 2 to 148 enclose the Globin domain; that stretch reads GLSEAEWQLV…FRKDIAAKYK (147 aa). Ser4 bears the Phosphoserine mark. His65 is a nitrite binding site. His65 provides a ligand contact to O2. Thr68 is subject to Phosphothreonine. His94 contributes to the heme b binding site.

Belongs to the globin family. As to quaternary structure, monomeric.

The protein localises to the cytoplasm. It is found in the sarcoplasm. It catalyses the reaction Fe(III)-heme b-[protein] + nitric oxide + H2O = Fe(II)-heme b-[protein] + nitrite + 2 H(+). It carries out the reaction H2O2 + AH2 = A + 2 H2O. Monomeric heme protein which primary function is to store oxygen and facilitate its diffusion within muscle tissues. Reversibly binds oxygen through a pentacoordinated heme iron and enables its timely and efficient release as needed during periods of heightened demand. Depending on the oxidative conditions of tissues and cells, and in addition to its ability to bind oxygen, it also has a nitrite reductase activity whereby it regulates the production of bioactive nitric oxide. Under stress conditions, like hypoxia and anoxia, it also protects cells against reactive oxygen species thanks to its pseudoperoxidase activity. This Indopacetus pacificus (Longman's beaked whale) protein is Myoglobin (MB).